Reading from the N-terminus, the 490-residue chain is GTPase Der (490 aa).

EngA-type G domains lie at 1–165 and 227–400; these read MRIA…QIPV and LKVA…TIAT. GTP-binding positions include 7–14, 54–58, 117–120, 233–240, 280–284, and 345–348; these read GRPNVGKS, DTGGV, NKAD, GHPNVGKS, DTAGL, and NKWD. One can recognise a KH-like domain in the interval 401-485; it reads TKLSTSLVNK…PFDLEYKAKP (85 aa).

Belongs to the TRAFAC class TrmE-Era-EngA-EngB-Septin-like GTPase superfamily. EngA (Der) GTPase family. In terms of assembly, associates with the 50S ribosomal subunit.

Functionally, GTPase that plays an essential role in the late steps of ribosome biogenesis. The sequence is that of GTPase Der from Chlamydia trachomatis serovar A (strain ATCC VR-571B / DSM 19440 / HAR-13).